A 60-amino-acid chain; its full sequence is UI (60 aa).

Residues 1 to 14 (AAAAGDSAASDLLG) are compositionally biased toward low complexity. The segment at 1–22 (AAAAGDSAASDLLGDNILRSED) is disordered. Valine 60 is subject to Valine amide.

Belongs to the sauvagine/corticotropin-releasing factor/urotensin I family.

It localises to the secreted. Its function is as follows. Urotensin is found in the teleost caudal neurosecretory system. It has a suggested role in osmoregulation and as a corticotropin-releasing factor. The non-hormonal portion of this precursor may be a urotensin binding protein, urophysin. The polypeptide is UI (Platichthys flesus (European flounder)).